Here is a 362-residue protein sequence, read N- to C-terminus: Histidinol-phosphate aminotransferase (362 aa).

The residue at position 218 (lysine 218) is an N6-(pyridoxal phosphate)lysine.

This sequence belongs to the class-II pyridoxal-phosphate-dependent aminotransferase family. Histidinol-phosphate aminotransferase subfamily. Homodimer. The cofactor is pyridoxal 5'-phosphate.

It catalyses the reaction L-histidinol phosphate + 2-oxoglutarate = 3-(imidazol-4-yl)-2-oxopropyl phosphate + L-glutamate. The protein operates within amino-acid biosynthesis; L-histidine biosynthesis; L-histidine from 5-phospho-alpha-D-ribose 1-diphosphate: step 7/9. The polypeptide is Histidinol-phosphate aminotransferase (Ruegeria sp. (strain TM1040) (Silicibacter sp.)).